A 324-amino-acid polypeptide reads, in one-letter code: Granaticin polyketide synthase bifunctional cyclase/dehydratase (324 aa).

Residues 1-21 (MVQPAATPVSLPSPTVHRSEH) form a disordered region.

The protein operates within antibiotic biosynthesis; granaticin biosynthesis. Is needed for correct cyclization of the oligoketide leading to isochromanequinone formation. The polypeptide is Granaticin polyketide synthase bifunctional cyclase/dehydratase (gra-orf4) (Streptomyces violaceoruber).